The sequence spans 223 residues: Rab-like protein 2A (223 aa).

GTP-binding positions include 28 to 35 (GDSAVGKS), 76 to 80 (DTAGQ), and 133 to 136 (NKID). Residues 200-223 (KLEQKEEDTSGQEQSDTTKSPSPS) are disordered. Residues 210–223 (GQEQSDTTKSPSPS) show a composition bias toward polar residues.

Belongs to the small GTPase superfamily. Rab family. In terms of assembly, interacts with IFT27, IFT81, IFT172, ATP6V1E1, HK1, LDHC, MAPRE1 and HSPA2. As to expression, isoform 2 is expressed in the testis and localizes to the mid-piece of the sperm tail (at protein level). Isoform 2 is expressed at higher levels in testis than isoform 1. Isoform 1 and isoform 2 are widely expressed and notably within other tissues containing motile cilia including the lung, trachea, brain, ovary and kidney.

Plays an essential role in male fertility, sperm intra-flagellar transport, and tail assembly. Binds, in a GTP-regulated manner, to a specific set of effector proteins including key proteins involved in cilia development and function and delivers them into the growing sperm tail. This Mus musculus (Mouse) protein is Rab-like protein 2A (Rabl2).